The following is a 239-amino-acid chain: Ribonuclease Le2 (239 aa).

5 cysteine pairs are disulfide-bonded: cysteine 5-cysteine 22, cysteine 13-cysteine 58, cysteine 21-cysteine 126, cysteine 66-cysteine 118, and cysteine 191-cysteine 225. Residues histidine 51, glutamate 111, and histidine 115 contribute to the active site.

This sequence belongs to the RNase T2 family.

It carries out the reaction a ribonucleotidyl-ribonucleotide-RNA + H2O = a 3'-end 3'-phospho-ribonucleotide-RNA + a 5'-end dephospho-ribonucleoside-RNA + H(+). Functionally, this is a base non-specific and adenylic acid preferential ribonuclease. The protein is Ribonuclease Le2 of Lentinula edodes (Shiitake mushroom).